An 83-amino-acid chain; its full sequence is Conotoxin LiCr95 (83 aa).

Positions 1–22 are cleaved as a signal peptide; that stretch reads MKLTCALIVAMLFLTACQLTTT. The propeptide occupies 23–50; sequence DDSRGRQKYPTERLRVKMRNPKLSKLTK. 3 disulfide bridges follow: C52–C67, C59–C71, and C66–C80.

It belongs to the conotoxin O1 superfamily. As to expression, expressed by the venom duct.

It localises to the secreted. The chain is Conotoxin LiCr95 from Conus lividus (Livid cone).